The chain runs to 156 residues: Endogenous retrovirus group K member 18 Pro protein (156 aa).

Residues 21–96 (LEGLVDTGAD…IPLNLWGRDL (76 aa)) enclose the Peptidase A2 domain. Aspartate 26 is an active-site residue. A G-patch domain is found at 111 to 156 (YSPMSQKIMTKMGYIPGKGLGKNEDGIKVPIEAKINHGREGTGYPF).

It belongs to the peptidase A2 family. HERV class-II K(HML-2) subfamily. In terms of assembly, active as a homodimer. Autoproteolytically processed at the N-terminus. Expected C-terminal autoprocessing not detected. The sequence shown is that of the processed Pro protein.

The enzyme catalyses Processing at the authentic HIV-1 PR recognition site and release of the mature p17 matrix and the p24 capsid protein, as a result of the cleavage of the -SQNY-|-PIVQ- cleavage site.. Its function is as follows. Retroviral proteases have roles in the processing of the primary translation products and the maturation of the viral particle. Endogenous Pro proteins may have kept, lost or modified their original function during evolution. The sequence is that of Endogenous retrovirus group K member 18 Pro protein (ERVK-18) from Homo sapiens (Human).